The sequence spans 365 residues: UDP-N-acetylglucosamine--N-acetylmuramyl-(pentapeptide) pyrophosphoryl-undecaprenol N-acetylglucosamine transferase (365 aa).

UDP-N-acetyl-alpha-D-glucosamine contacts are provided by residues 19–21, N131, R170, S201, I255, 274–279, and Q300; these read TGG and ALTVTE.

The protein belongs to the glycosyltransferase 28 family. MurG subfamily.

The protein resides in the cell inner membrane. It carries out the reaction di-trans,octa-cis-undecaprenyl diphospho-N-acetyl-alpha-D-muramoyl-L-alanyl-D-glutamyl-meso-2,6-diaminopimeloyl-D-alanyl-D-alanine + UDP-N-acetyl-alpha-D-glucosamine = di-trans,octa-cis-undecaprenyl diphospho-[N-acetyl-alpha-D-glucosaminyl-(1-&gt;4)]-N-acetyl-alpha-D-muramoyl-L-alanyl-D-glutamyl-meso-2,6-diaminopimeloyl-D-alanyl-D-alanine + UDP + H(+). It participates in cell wall biogenesis; peptidoglycan biosynthesis. Functionally, cell wall formation. Catalyzes the transfer of a GlcNAc subunit on undecaprenyl-pyrophosphoryl-MurNAc-pentapeptide (lipid intermediate I) to form undecaprenyl-pyrophosphoryl-MurNAc-(pentapeptide)GlcNAc (lipid intermediate II). The chain is UDP-N-acetylglucosamine--N-acetylmuramyl-(pentapeptide) pyrophosphoryl-undecaprenol N-acetylglucosamine transferase from Acinetobacter baumannii (strain SDF).